The primary structure comprises 112 residues: Large ribosomal subunit protein mL53 (112 aa).

The protein belongs to the mitochondrion-specific ribosomal protein mL53 family. Component of the mitochondrial large ribosomal subunit (mt-LSU). Mature mammalian 55S mitochondrial ribosomes consist of a small (28S) and a large (39S) subunit. The 28S small subunit contains a 12S ribosomal RNA (12S mt-rRNA) and 30 different proteins. The 39S large subunit contains a 16S rRNA (16S mt-rRNA), a copy of mitochondrial valine transfer RNA (mt-tRNA(Val)), which plays an integral structural role, and 52 different proteins. mL53 is located at the L7/L12 stalk.

The protein resides in the mitochondrion. This is Large ribosomal subunit protein mL53 (MRPL53) from Homo sapiens (Human).